Consider the following 320-residue polypeptide: Aspartate carbamoyltransferase catalytic subunit (320 aa).

Arginine 58 and threonine 59 together coordinate carbamoyl phosphate. L-aspartate is bound at residue lysine 86. Residues arginine 108, histidine 136, and glutamine 139 each contribute to the carbamoyl phosphate site. Positions 169 and 223 each coordinate L-aspartate. 2 residues coordinate carbamoyl phosphate: glycine 264 and proline 265.

This sequence belongs to the aspartate/ornithine carbamoyltransferase superfamily. ATCase family. Heterododecamer (2C3:3R2) of six catalytic PyrB chains organized as two trimers (C3), and six regulatory PyrI chains organized as three dimers (R2).

The enzyme catalyses carbamoyl phosphate + L-aspartate = N-carbamoyl-L-aspartate + phosphate + H(+). It participates in pyrimidine metabolism; UMP biosynthesis via de novo pathway; (S)-dihydroorotate from bicarbonate: step 2/3. Catalyzes the condensation of carbamoyl phosphate and aspartate to form carbamoyl aspartate and inorganic phosphate, the committed step in the de novo pyrimidine nucleotide biosynthesis pathway. This chain is Aspartate carbamoyltransferase catalytic subunit, found in Cereibacter sphaeroides (strain ATCC 17025 / ATH 2.4.3) (Rhodobacter sphaeroides).